A 142-amino-acid polypeptide reads, in one-letter code: Large ribosomal subunit protein uL11 (142 aa).

The protein belongs to the universal ribosomal protein uL11 family. As to quaternary structure, part of the ribosomal stalk of the 50S ribosomal subunit. Interacts with L10 and the large rRNA to form the base of the stalk. L10 forms an elongated spine to which L12 dimers bind in a sequential fashion forming a multimeric L10(L12)X complex. One or more lysine residues are methylated.

Its function is as follows. Forms part of the ribosomal stalk which helps the ribosome interact with GTP-bound translation factors. In Rhodopseudomonas palustris (strain HaA2), this protein is Large ribosomal subunit protein uL11.